A 286-amino-acid polypeptide reads, in one-letter code: GTP cyclohydrolase MptA (286 aa).

The protein belongs to the GTP cyclohydrolase IV family. In terms of assembly, homodimer. The cofactor is Fe(2+).

The catalysed reaction is GTP + H2O = 7,8-dihydroneopterin 2',3'-cyclic phosphate + formate + diphosphate + H(+). The protein operates within cofactor biosynthesis; 5,6,7,8-tetrahydromethanopterin biosynthesis. Converts GTP to 7,8-dihydro-D-neopterin 2',3'-cyclic phosphate, the first intermediate in the biosynthesis of coenzyme methanopterin. The protein is GTP cyclohydrolase MptA of Thermoplasma acidophilum (strain ATCC 25905 / DSM 1728 / JCM 9062 / NBRC 15155 / AMRC-C165).